Reading from the N-terminus, the 116-residue chain is Aspartate 1-decarboxylase (116 aa).

The active-site Schiff-base intermediate with substrate; via pyruvic acid is serine 25. Serine 25 carries the pyruvic acid (Ser) modification. Residue threonine 57 participates in substrate binding. Tyrosine 58 (proton donor) is an active-site residue. 73–75 serves as a coordination point for substrate; that stretch reads GAA.

The protein belongs to the PanD family. As to quaternary structure, heterooctamer of four alpha and four beta subunits. Pyruvate is required as a cofactor. In terms of processing, is synthesized initially as an inactive proenzyme, which is activated by self-cleavage at a specific serine bond to produce a beta-subunit with a hydroxyl group at its C-terminus and an alpha-subunit with a pyruvoyl group at its N-terminus.

The protein localises to the cytoplasm. The catalysed reaction is L-aspartate + H(+) = beta-alanine + CO2. It functions in the pathway cofactor biosynthesis; (R)-pantothenate biosynthesis; beta-alanine from L-aspartate: step 1/1. Catalyzes the pyruvoyl-dependent decarboxylation of aspartate to produce beta-alanine. The sequence is that of Aspartate 1-decarboxylase from Leptospira interrogans serogroup Icterohaemorrhagiae serovar copenhageni (strain Fiocruz L1-130).